Consider the following 177-residue polypeptide: Large ribosomal subunit protein uL6 (177 aa).

Residues 151 to 177 (KRPPEPYKGKGVKYADEHIRRKEGKKS) are disordered. Residues 152–177 (RPPEPYKGKGVKYADEHIRRKEGKKS) show a composition bias toward basic and acidic residues.

The protein belongs to the universal ribosomal protein uL6 family. In terms of assembly, part of the 50S ribosomal subunit.

Functionally, this protein binds to the 23S rRNA, and is important in its secondary structure. It is located near the subunit interface in the base of the L7/L12 stalk, and near the tRNA binding site of the peptidyltransferase center. In Fusobacterium nucleatum subsp. nucleatum (strain ATCC 25586 / DSM 15643 / BCRC 10681 / CIP 101130 / JCM 8532 / KCTC 2640 / LMG 13131 / VPI 4355), this protein is Large ribosomal subunit protein uL6.